Here is a 299-residue protein sequence, read N- to C-terminus: Protein translocase subunit SecF (299 aa).

A run of 6 helical transmembrane segments spans residues 14–34 (VLIV…FYHG), 142–162 (IFLV…RFKL), 166–186 (IASI…LGVF), 193–213 (YIIV…IIIF), 245–265 (LTSV…EGSI), and 270–290 (LVFM…ASPI).

Belongs to the SecD/SecF family. SecF subfamily. Forms a complex with SecD. Part of the essential Sec protein translocation apparatus which comprises SecA, SecYEG and auxiliary proteins SecDF. Other proteins may also be involved.

It is found in the cell inner membrane. In terms of biological role, part of the Sec protein translocase complex. Interacts with the SecYEG preprotein conducting channel. SecDF uses the proton motive force (PMF) to complete protein translocation after the ATP-dependent function of SecA. This chain is Protein translocase subunit SecF, found in Borreliella burgdorferi (strain ATCC 35210 / DSM 4680 / CIP 102532 / B31) (Borrelia burgdorferi).